A 459-amino-acid chain; its full sequence is Cysteine--tRNA ligase (459 aa).

A Zn(2+)-binding site is contributed by C28. Positions 30–40 (VTVYDLCHIGH) match the 'HIGH' region motif. Residues C209, H234, and E238 each coordinate Zn(2+). The 'KMSKS' region signature appears at 266-270 (KMSKS). K269 provides a ligand contact to ATP.

This sequence belongs to the class-I aminoacyl-tRNA synthetase family. Monomer. Requires Zn(2+) as cofactor.

Its subcellular location is the cytoplasm. The catalysed reaction is tRNA(Cys) + L-cysteine + ATP = L-cysteinyl-tRNA(Cys) + AMP + diphosphate. In Haemophilus influenzae (strain 86-028NP), this protein is Cysteine--tRNA ligase.